A 428-amino-acid chain; its full sequence is Glutamate-1-semialdehyde 2,1-aminomutase (428 aa).

Position 267 is an N6-(pyridoxal phosphate)lysine (Lys-267).

This sequence belongs to the class-III pyridoxal-phosphate-dependent aminotransferase family. HemL subfamily. As to quaternary structure, homodimer. Requires pyridoxal 5'-phosphate as cofactor.

It is found in the cytoplasm. It carries out the reaction (S)-4-amino-5-oxopentanoate = 5-aminolevulinate. Its pathway is porphyrin-containing compound metabolism; protoporphyrin-IX biosynthesis; 5-aminolevulinate from L-glutamyl-tRNA(Glu): step 2/2. This chain is Glutamate-1-semialdehyde 2,1-aminomutase, found in Flavobacterium johnsoniae (strain ATCC 17061 / DSM 2064 / JCM 8514 / BCRC 14874 / CCUG 350202 / NBRC 14942 / NCIMB 11054 / UW101) (Cytophaga johnsonae).